Consider the following 289-residue polypeptide: MNSENSFSSSEHITVLLHEAVNGLALKENGIYIDGTFGRGGHSRFILSQLSSNGRLIAVDRDPRAIAEAHKIQDLRFQIEHNSFSHIPEICDKLNLVGKIDGILLDLGVSSPQLDEAERGFSFMKDGPLDMRMDTTQGLSAEEWLKQVSIEDLTWVLKTFGEERFAKRIATAIVDFNKSAVKNGTEFLSRTSQLAELISQAVPFKDKHKHPATRSFQAIRIFINSELDELESLLNSALDMLAPEGRLSIISFHSLEDRMVKHFMKNKVRARIFPKVYHCEKIKFSVIKN.

S-adenosyl-L-methionine-binding positions include 40–42, D60, F84, D106, and Q113; that span reads GGH.

The protein belongs to the methyltransferase superfamily. RsmH family.

The protein resides in the cytoplasm. It catalyses the reaction cytidine(1402) in 16S rRNA + S-adenosyl-L-methionine = N(4)-methylcytidine(1402) in 16S rRNA + S-adenosyl-L-homocysteine + H(+). In terms of biological role, specifically methylates the N4 position of cytidine in position 1402 (C1402) of 16S rRNA. In Haemophilus influenzae (strain PittGG), this protein is Ribosomal RNA small subunit methyltransferase H.